The sequence spans 393 residues: E3 ubiquitin-protein transferase RMND5B (393 aa).

N-acetylmethionine is present on Met1. In terms of domain architecture, LisH spans 116-148 (QQQILQMAIVEHLYQQGMLSVAEELCQESTLNV). The CTLH domain occupies 155–212 (PFLELNRILEALHEQDLGPALEWAVSHRQRLLELNSSLEFKLHRLHFIRLLAGGPEKQ). Residues 338–379 (CPILRQQTSDSNPPIKLICGHVISRDALNKLINGGKLKCPYC) form an RING-Gid-type zinc finger.

In terms of assembly, identified in the CTLH complex that contains GID4, RANBP9 and/or RANBP10, MKLN1, MAEA, RMND5A (or alternatively its paralog RMND5B), GID8, ARMC8, WDR26 and YPEL5. Within this complex, MAEA, RMND5A (or alternatively its paralog RMND5B), GID8, WDR26, and RANBP9 and/or RANBP10 form the catalytic core, while GID4, MKLN1, ARMC8 and YPEL5 have ancillary roles.

It is found in the cytoplasm. The protein localises to the cytosol. It carries out the reaction S-ubiquitinyl-[E2 ubiquitin-conjugating enzyme]-L-cysteine + [acceptor protein]-L-lysine = [E2 ubiquitin-conjugating enzyme]-L-cysteine + N(6)-ubiquitinyl-[acceptor protein]-L-lysine.. Its function is as follows. Core component of the CTLH E3 ubiquitin-protein ligase complex that selectively accepts ubiquitin from UBE2H and mediates ubiquitination and subsequent proteasomal degradation of the transcription factor HBP1. MAEA and RMND5A are both required for catalytic activity of the CTLH E3 ubiquitin-protein ligase complex. Catalytic activity of the complex is required for normal cell proliferation. The CTLH E3 ubiquitin-protein ligase complex is not required for the degradation of enzymes involved in gluconeogenesis, such as FBP1. In Mus musculus (Mouse), this protein is E3 ubiquitin-protein transferase RMND5B (Rmnd5b).